A 242-amino-acid chain; its full sequence is Orotidine 5'-phosphate decarboxylase (242 aa).

Residues aspartate 21, lysine 43, 71–80, threonine 124, arginine 185, glutamine 195, glycine 215, and arginine 216 each bind substrate; that span reads DLKFFDVPET. Lysine 73 acts as the Proton donor in catalysis.

It belongs to the OMP decarboxylase family. Type 1 subfamily. In terms of assembly, homodimer.

The catalysed reaction is orotidine 5'-phosphate + H(+) = UMP + CO2. The protein operates within pyrimidine metabolism; UMP biosynthesis via de novo pathway; UMP from orotate: step 2/2. Its function is as follows. Catalyzes the decarboxylation of orotidine 5'-monophosphate (OMP) to uridine 5'-monophosphate (UMP). The sequence is that of Orotidine 5'-phosphate decarboxylase from Methylococcus capsulatus (strain ATCC 33009 / NCIMB 11132 / Bath).